We begin with the raw amino-acid sequence, 492 residues long: MQVIETLADGLKRELKIVIPAADMKARLDERLVDAKDKVRINGFRPGKVPMGHLKKMYGKSIMADLVNELVREKPSEILSSRGEKSATQPAISMTEDEQEAEKILSAESDFEFTVAYEIIPAIELKANDGIKVTREVVEVSEDEINEQILKIAESARTYETKKGKAADGDRVTMNYLGKVDGVAFDGGTAEDAELVLGSGRFIPGFEDQLVGVKAGDEKTITVTFPADYPAANLAGKDATFDVTVKEVAAAAAVEINDELAEKLGLESAEKLKEIVKGQIESQFGNVTRQKVKRQILDQLDEMYKFDTPAGLVDAEFDNIWRQINTDLAQSGKTFADEDTTEEEAREEYRKLAERRVRLGLVLSEIGEKAGVEVTEEEMQRALFQQLQQFPGQQKEILDFFRNTPGASASLRAPIFEEKVIDKLLTEISVTDKTVSKEELLADDGEEETETKKKAPAKKKAAAKADDAAEGEEAAPKKKAPAKKKATEADAE.

The disordered stretch occupies residues 77-96 (EILSSRGEKSATQPAISMTE). The PPIase FKBP-type domain occupies 169-254 (GDRVTMNYLG…VKEVAAAAAV (86 aa)). Positions 439–492 (ELLADDGEEETETKKKAPAKKKAAAKADDAAEGEEAAPKKKAPAKKKATEADAE) are disordered.

It belongs to the FKBP-type PPIase family. Tig subfamily.

The protein localises to the cytoplasm. It carries out the reaction [protein]-peptidylproline (omega=180) = [protein]-peptidylproline (omega=0). Its function is as follows. Involved in protein export. Acts as a chaperone by maintaining the newly synthesized protein in an open conformation. Functions as a peptidyl-prolyl cis-trans isomerase. In Agrobacterium fabrum (strain C58 / ATCC 33970) (Agrobacterium tumefaciens (strain C58)), this protein is Trigger factor.